The chain runs to 224 residues: Adenylate kinase (224 aa).

Residue 10 to 15 (GSGKST) participates in ATP binding. The interval 30–59 (SSGDLIRGEIERKSSLGLEMAAYLSRGDLI) is NMP. Residues serine 31, arginine 36, 57 to 59 (DLI), 83 to 86 (GYPR), and glutamine 90 each bind AMP. An LID region spans residues 124 to 161 (GRRICPNCGAVYHITYNPPKVPGICDVCGTKLIQRTDD). Arginine 125 is an ATP binding site. Zn(2+) contacts are provided by cysteine 128 and cysteine 131. Residue 134–135 (VY) coordinates ATP. Zn(2+) is bound by residues cysteine 148 and cysteine 151. AMP contacts are provided by arginine 158 and arginine 169. Glycine 197 contacts ATP.

Belongs to the adenylate kinase family. As to quaternary structure, monomer.

The protein resides in the cytoplasm. The catalysed reaction is AMP + ATP = 2 ADP. It functions in the pathway purine metabolism; AMP biosynthesis via salvage pathway; AMP from ADP: step 1/1. Catalyzes the reversible transfer of the terminal phosphate group between ATP and AMP. Plays an important role in cellular energy homeostasis and in adenine nucleotide metabolism. The chain is Adenylate kinase from Thermococcus gammatolerans (strain DSM 15229 / JCM 11827 / EJ3).